The following is a 362-amino-acid chain: MIAEKIRVALDERSYDIEMGAGNLDRIGSLCREVGLSGTAAVVSNTTVAPLYYETVRLSMERAGYRVVPVTLPDGEGYKNSATLNLIYDGLVDASLDRGSFILALGGGVIGDMAGFAAASYLRGIPFVQIPTTLLSQVDSSVGGKTGINHPRGKNLIGAFYQPKAVLIDVATLDTLPKREFLSGLGEIVKYGAVLDGGFFDFLEKNAKLLLARDKEALIQAVSRSCAIKAKVVAEDEREGGVRAVLNYGHTLGHAVETLTGYTRYLHGEAVAIGMVQAARLSQHYGFCSQADRERIEALVVALGLPTELPSFPPQQYREALSHDKKVRDKGLLFICNQGIGAYRMERLTDLGALLEICGIGE.

Residues 74–79 (DGEGYK), 108–112 (GVIGD), 132–133 (TT), lysine 145, lysine 154, and 172–175 (TLDT) each bind NAD(+). Residues glutamate 187, histidine 250, and histidine 267 each contribute to the Zn(2+) site.

This sequence belongs to the sugar phosphate cyclases superfamily. Dehydroquinate synthase family. Co(2+) is required as a cofactor. Requires Zn(2+) as cofactor. NAD(+) serves as cofactor.

It localises to the cytoplasm. The catalysed reaction is 7-phospho-2-dehydro-3-deoxy-D-arabino-heptonate = 3-dehydroquinate + phosphate. Its pathway is metabolic intermediate biosynthesis; chorismate biosynthesis; chorismate from D-erythrose 4-phosphate and phosphoenolpyruvate: step 2/7. Its function is as follows. Catalyzes the conversion of 3-deoxy-D-arabino-heptulosonate 7-phosphate (DAHP) to dehydroquinate (DHQ). This Citrifermentans bemidjiense (strain ATCC BAA-1014 / DSM 16622 / JCM 12645 / Bem) (Geobacter bemidjiensis) protein is 3-dehydroquinate synthase.